The primary structure comprises 116 residues: Ribosome-binding factor A (116 aa).

It belongs to the RbfA family. As to quaternary structure, monomer. Binds 30S ribosomal subunits, but not 50S ribosomal subunits or 70S ribosomes.

It is found in the cytoplasm. Its function is as follows. One of several proteins that assist in the late maturation steps of the functional core of the 30S ribosomal subunit. Associates with free 30S ribosomal subunits (but not with 30S subunits that are part of 70S ribosomes or polysomes). Required for efficient processing of 16S rRNA. May interact with the 5'-terminal helix region of 16S rRNA. The protein is Ribosome-binding factor A of Enterococcus faecalis (strain ATCC 700802 / V583).